Consider the following 269-residue polypeptide: tRNA pseudouridine synthase A (269 aa).

The active-site Nucleophile is aspartate 51. Residue tyrosine 109 participates in substrate binding.

The protein belongs to the tRNA pseudouridine synthase TruA family. In terms of assembly, homodimer.

The enzyme catalyses uridine(38/39/40) in tRNA = pseudouridine(38/39/40) in tRNA. Functionally, formation of pseudouridine at positions 38, 39 and 40 in the anticodon stem and loop of transfer RNAs. This is tRNA pseudouridine synthase A from Haemophilus influenzae (strain ATCC 51907 / DSM 11121 / KW20 / Rd).